The following is a 180-amino-acid chain: NADH-quinone oxidoreductase subunit I (180 aa).

2 4Fe-4S ferredoxin-type domains span residues 48-80 (IVLTRDPDGQERCVACNLCAVACPVGCISLQKA) and 90-119 (EFFRINFSRCIFCGLCEEACPTTAIQLTPD). The [4Fe-4S] cluster site is built by cysteine 60, cysteine 63, cysteine 66, cysteine 70, cysteine 99, cysteine 102, cysteine 105, and cysteine 109.

Belongs to the complex I 23 kDa subunit family. NDH-1 is composed of 13 different subunits. Subunits NuoA, H, J, K, L, M, N constitute the membrane sector of the complex. It depends on [4Fe-4S] cluster as a cofactor.

It is found in the cell inner membrane. The catalysed reaction is a quinone + NADH + 5 H(+)(in) = a quinol + NAD(+) + 4 H(+)(out). Functionally, NDH-1 shuttles electrons from NADH, via FMN and iron-sulfur (Fe-S) centers, to quinones in the respiratory chain. The immediate electron acceptor for the enzyme in this species is believed to be ubiquinone. Couples the redox reaction to proton translocation (for every two electrons transferred, four hydrogen ions are translocated across the cytoplasmic membrane), and thus conserves the redox energy in a proton gradient. The polypeptide is NADH-quinone oxidoreductase subunit I (Erwinia tasmaniensis (strain DSM 17950 / CFBP 7177 / CIP 109463 / NCPPB 4357 / Et1/99)).